Reading from the N-terminus, the 463-residue chain is Putative sodium-coupled neutral amino acid transporter 11 (463 aa).

The tract at residues 1–27 is disordered; it reads MGYPGQRPVIPPQSHRDDRETLVSEHK. Residues 14–25 show a composition bias toward basic and acidic residues; that stretch reads SHRDDRETLVSE. 11 helical membrane passes run 38–58, 65–85, 105–125, 150–170, 178–198, 225–245, 256–276, 298–320, 336–356, 358–378, and 397–417; these read AVFN…PYSM, LGIL…ILLI, GFPG…IAMI, LLIG…LPLS, LGKI…IVVA, VGVM…YGSL, IIHV…TCGY, VTFG…CFVT, VCHI…SLLI, CLGI…IFII, and IMSC…FVMA. N437, N442, and N458 each carry an N-linked (GlcNAc...) asparagine glycan.

This sequence belongs to the amino acid/polyamine transporter 2 family.

Its subcellular location is the membrane. Its function is as follows. Putative sodium-dependent amino acid/proton antiporter. This chain is Putative sodium-coupled neutral amino acid transporter 11 (SLC38A11), found in Bos taurus (Bovine).